The following is a 446-amino-acid chain: MAPNTSTMDETGLPVERDFSFRILTACFLSLLILSTLLGNTLVCAAVIRFRHLRSKVTNFFVISLAVSDLLVAVLVMPWKAVAEIAGFWPFGSFCNIWVAFDIMCSTASILNLCVISVDRYWAISSPFQYERKMTPKAAFILISVAWTLSVLISFIPVQLSWHKAKPTWPLDGNFTSLEDAEDDNCDTRLSRTYAISSSLISFYIPVAIMIVTYTSIYRIAQKQIRRISALERAAVHAKNCQTTTGNGNPVECSQSESSFKMSFKRETKVLKTLSVIMGVFVCCWLPFFISNCMVPFCGSEETQPFCIDSITFDVFVWFGWANSSLNPIIYAFNADFQKAFSTLLGCYRLCPTTNNAIETVSINNNGAVMFSSHHEPRGSISKDCNLVYLIPHAVGSSEDLKREEAGGIPKPLEKLSPALSVILDYDTDVSLEKIQPVTHSGQHST.

Residues 1-22 (MAPNTSTMDETGLPVERDFSFR) are Extracellular-facing. N-linked (GlcNAc...) asparagine glycosylation occurs at N4. The chain crosses the membrane as a helical span at residues 23–48 (ILTACFLSLLILSTLLGNTLVCAAVI). The Cytoplasmic portion of the chain corresponds to 49–59 (RFRHLRSKVTN). Residues 60–86 (FFVISLAVSDLLVAVLVMPWKAVAEIA) form a helical membrane-spanning segment. Topologically, residues 87 to 95 (GFWPFGSFC) are extracellular. C95 and C186 are oxidised to a cystine. The helical transmembrane segment at 96-118 (NIWVAFDIMCSTASILNLCVISV) threads the bilayer. At 119-137 (DRYWAISSPFQYERKMTPK) the chain is on the cytoplasmic side. The helical transmembrane segment at 138-162 (AAFILISVAWTLSVLISFIPVQLSW) threads the bilayer. Residues 163 to 192 (HKAKPTWPLDGNFTSLEDAEDDNCDTRLSR) lie on the Extracellular side of the membrane. A helical transmembrane segment spans residues 193–218 (TYAISSSLISFYIPVAIMIVTYTSIY). The Cytoplasmic portion of the chain corresponds to 219–272 (RIAQKQIRRISALERAAVHAKNCQTTTGNGNPVECSQSESSFKMSFKRETKVLK). The chain crosses the membrane as a helical span at residues 273 to 299 (TLSVIMGVFVCCWLPFFISNCMVPFCG). The Extracellular segment spans residues 300-312 (SEETQPFCIDSIT). Residues 313-337 (FDVFVWFGWANSSLNPIIYAFNADF) form a helical membrane-spanning segment. Residues 338–446 (QKAFSTLLGC…PVTHSGQHST (109 aa)) lie on the Cytoplasmic side of the membrane. 2 S-palmitoyl cysteine lipidation sites follow: C347 and C351. S441 carries the phosphoserine modification.

The protein belongs to the G-protein coupled receptor 1 family. Interacts with DNAJC14 via its C-terminus. Interacts with DRD2. Interacts with DORIP1.

It localises to the cell membrane. The protein localises to the endoplasmic reticulum membrane. Its subcellular location is the cell projection. The protein resides in the cilium membrane. It is found in the dendrite. It localises to the dendritic spine. Dopamine receptor whose activity is mediated by G proteins which activate adenylyl cyclase. The chain is D(1A) dopamine receptor (Drd1) from Mus musculus (Mouse).